A 270-amino-acid chain; its full sequence is Putative pyruvate, phosphate dikinase regulatory protein (270 aa).

G149–T156 serves as a coordination point for ADP.

Belongs to the pyruvate, phosphate/water dikinase regulatory protein family. PDRP subfamily.

It carries out the reaction N(tele)-phospho-L-histidyl/L-threonyl-[pyruvate, phosphate dikinase] + ADP = N(tele)-phospho-L-histidyl/O-phospho-L-threonyl-[pyruvate, phosphate dikinase] + AMP + H(+). The enzyme catalyses N(tele)-phospho-L-histidyl/O-phospho-L-threonyl-[pyruvate, phosphate dikinase] + phosphate + H(+) = N(tele)-phospho-L-histidyl/L-threonyl-[pyruvate, phosphate dikinase] + diphosphate. Bifunctional serine/threonine kinase and phosphorylase involved in the regulation of the pyruvate, phosphate dikinase (PPDK) by catalyzing its phosphorylation/dephosphorylation. This chain is Putative pyruvate, phosphate dikinase regulatory protein, found in Sphingopyxis alaskensis (strain DSM 13593 / LMG 18877 / RB2256) (Sphingomonas alaskensis).